We begin with the raw amino-acid sequence, 286 residues long: uncharacterized protein (286 aa).

Belongs to the NmrA-type oxidoreductase family.

This is an uncharacterized protein from Bacillus subtilis (strain 168).